The chain runs to 601 residues: NAD(+)--arginine ADP-ribosyltransferase Chelt (601 aa).

Residues 1-18 form the signal peptide; the sequence is MKTIISLIFIMFPLFVSA. NAD(+) contacts are provided by residues 26-43 and E130; that span reads ADSR…LYPR. The active site involves E130. An intrachain disulfide couples C205 to C220.

This sequence belongs to the enterotoxin A family.

It localises to the secreted. It catalyses the reaction L-arginyl-[protein] + NAD(+) = N(omega)-(ADP-D-ribosyl)-L-arginyl-[protein] + nicotinamide + H(+). Its function is as follows. A probable mono(ADP-ribosyl)transferase, it may ADP-ribosylate Arg in target protein(s). Upon expression in yeast cells causes cell death. In Vibrio cholerae, this protein is NAD(+)--arginine ADP-ribosyltransferase Chelt.